Reading from the N-terminus, the 311-residue chain is Transcription factor BIM2 (311 aa).

2 disordered regions span residues 1-60 (MRTG…RRSK) and 271-311 (ANQG…MKTL). Basic and acidic residues-rich tracts occupy residues 33-44 (SNRDSKENDKAS) and 51-60 (SVTEQRRRSK). One can recognise a bHLH domain in the interval 45–95 (AIRSKHSVTEQRRRSKINERFQILRELIPNSEQKRDTASFLLEVIDYVQYL).

As to quaternary structure, homodimer. Interacts with the N-terminus of BZR2/BES1. Expressed constitutively in roots, leaves, stems, and flowers.

The protein resides in the nucleus. Positive brassinosteroid-signaling protein. In Arabidopsis thaliana (Mouse-ear cress), this protein is Transcription factor BIM2 (BIM2).